A 160-amino-acid chain; its full sequence is CXXC motif containing zinc binding protein (160 aa).

Cys-33, Cys-36, Cys-67, and Cys-70 together coordinate Zn(2+). Ser-75 is subject to Phosphoserine.

This sequence belongs to the UPF0587 family. In terms of assembly, monomer.

This is CXXC motif containing zinc binding protein from Rattus norvegicus (Rat).